The sequence spans 210 residues: NADH dehydrogenase [ubiquinone] iron-sulfur protein 8, mitochondrial (210 aa).

Residues 1–34 constitute a mitochondrion transit peptide; it reads MRCLTTPMLLRALAQAARAGPPCGRSLHSSAVAA. 4Fe-4S ferredoxin-type domains follow at residues 102 to 131 and 141 to 170; these read RRYP…IEAE and TRYD…EGPN. C111, C114, C117, C121, C150, C153, C156, and C160 together coordinate [4Fe-4S] cluster.

It belongs to the complex I 23 kDa subunit family. Core subunit of respiratory chain NADH dehydrogenase (Complex I) which is composed of 45 different subunits. This is a component of the iron-sulfur (IP) fragment of the enzyme. Interacts with RAB5IF. It depends on [4Fe-4S] cluster as a cofactor.

It is found in the mitochondrion inner membrane. It carries out the reaction a ubiquinone + NADH + 5 H(+)(in) = a ubiquinol + NAD(+) + 4 H(+)(out). Core subunit of the mitochondrial membrane respiratory chain NADH dehydrogenase (Complex I) which catalyzes electron transfer from NADH through the respiratory chain, using ubiquinone as an electron acceptor. Essential for the catalytic activity and assembly of complex I. This is NADH dehydrogenase [ubiquinone] iron-sulfur protein 8, mitochondrial (NDUFS8) from Pongo abelii (Sumatran orangutan).